Reading from the N-terminus, the 681-residue chain is Phosphomethylpyrimidine synthase (681 aa).

The segment covering 1–13 (MSNNTTSLPAENS) has biased composition (polar residues). Residues 1-29 (MSNNTTSLPAENSSHPRKGTPIRKKQREE) form a disordered region. Basic residues predominate over residues 15-25 (HPRKGTPIRKK). Residues Asn254, Met283, Tyr312, His348, 368–370 (SRG), 409–412 (DGLR), and Glu448 contribute to the substrate site. Position 452 (His452) interacts with Zn(2+). Tyr475 contacts substrate. His516 contacts Zn(2+). Positions 596, 599, and 604 each coordinate [4Fe-4S] cluster. Positions 658 to 667 (FRSRGSELYH) are enriched in basic and acidic residues. The tract at residues 658–681 (FRSRGSELYHRPANLSAEANNEPT) is disordered.

This sequence belongs to the ThiC family. Homodimer. [4Fe-4S] cluster serves as cofactor.

The enzyme catalyses 5-amino-1-(5-phospho-beta-D-ribosyl)imidazole + S-adenosyl-L-methionine = 4-amino-2-methyl-5-(phosphooxymethyl)pyrimidine + CO + 5'-deoxyadenosine + formate + L-methionine + 3 H(+). It participates in cofactor biosynthesis; thiamine diphosphate biosynthesis. Its function is as follows. Catalyzes the synthesis of the hydroxymethylpyrimidine phosphate (HMP-P) moiety of thiamine from aminoimidazole ribotide (AIR) in a radical S-adenosyl-L-methionine (SAM)-dependent reaction. The protein is Phosphomethylpyrimidine synthase of Yersinia pseudotuberculosis serotype I (strain IP32953).